A 121-amino-acid polypeptide reads, in one-letter code: Prefoldin subunit beta (121 aa).

It belongs to the prefoldin subunit beta family. In terms of assembly, heterohexamer of two alpha and four beta subunits.

The protein resides in the cytoplasm. Molecular chaperone capable of stabilizing a range of proteins. Seems to fulfill an ATP-independent, HSP70-like function in archaeal de novo protein folding. The polypeptide is Prefoldin subunit beta (Methanosphaerula palustris (strain ATCC BAA-1556 / DSM 19958 / E1-9c)).